We begin with the raw amino-acid sequence, 152 residues long: SsrA-binding protein (152 aa).

Belongs to the SmpB family.

Its subcellular location is the cytoplasm. Required for rescue of stalled ribosomes mediated by trans-translation. Binds to transfer-messenger RNA (tmRNA), required for stable association of tmRNA with ribosomes. tmRNA and SmpB together mimic tRNA shape, replacing the anticodon stem-loop with SmpB. tmRNA is encoded by the ssrA gene; the 2 termini fold to resemble tRNA(Ala) and it encodes a 'tag peptide', a short internal open reading frame. During trans-translation Ala-aminoacylated tmRNA acts like a tRNA, entering the A-site of stalled ribosomes, displacing the stalled mRNA. The ribosome then switches to translate the ORF on the tmRNA; the nascent peptide is terminated with the 'tag peptide' encoded by the tmRNA and targeted for degradation. The ribosome is freed to recommence translation, which seems to be the essential function of trans-translation. The protein is SsrA-binding protein of Rickettsia akari (strain Hartford).